A 321-amino-acid chain; its full sequence is Putative membrane-bound redox modulator Alx (321 aa).

At 1 to 6 (MNTVGT) the chain is on the periplasmic side. A helical membrane pass occupies residues 7–27 (PLLWGGFAVVVAIMLAIDLLL). Over 28–43 (QGRRGAHAMTMKQAAA) the chain is Cytoplasmic. A helical transmembrane segment spans residues 44 to 64 (WSLVWVTLSLLFNAAFWWYLV). The Periplasmic portion of the chain corresponds to 65-89 (QTEGRAVADPQALAFLTGYLIEKSL). The helical transmembrane segment at 90-110 (AVDNVFVWLMLFSYFSVPAAL) threads the bilayer. The Cytoplasmic portion of the chain corresponds to 111 to 113 (QRR). A helical membrane pass occupies residues 114 to 134 (VLVYGVLGAIVLRTIMIFTGS). Residue Trp135 is a topological domain, periplasmic. A helical transmembrane segment spans residues 136 to 156 (LISQFDWILYIFGAFLLFTGV). Topologically, residues 157–198 (KMALAHEDESGIGDKPLVRWLRGHLRMTDTIDNEHFFVRKNG) are cytoplasmic. The helical transmembrane segment at 199-219 (LLYATPLMLVLILVELSDVIF) threads the bilayer. Topologically, residues 220-225 (AVDSIP) are periplasmic. The chain crosses the membrane as a helical span at residues 226–246 (AIFAVTTDPFIVLTSNLFAIL). Residues 247–261 (GLRAMYFLLAGVAER) are Cytoplasmic-facing. A helical transmembrane segment spans residues 262 to 282 (FSMLKYGLAVILVFIGIKMLI). Residues 283-286 (VDFY) are Periplasmic-facing. A helical transmembrane segment spans residues 287–307 (HIPIAVSLGVVFGILVMTFII). Over 308 to 321 (NAWVNYRHDKQRVG) the chain is Cytoplasmic.

The protein belongs to the TerC family.

Its subcellular location is the cell inner membrane. In terms of biological role, has been proposed to be a redox modulator. This is Putative membrane-bound redox modulator Alx (alx) from Escherichia coli O157:H7.